The following is a 1002-amino-acid chain: Lon protease homolog, mitochondrial (1002 aa).

The 212-residue stretch at 102-313 (VIALPLPHRP…LTLELVKKEM (212 aa)) folds into the Lon N-terminal domain. Position 468–475 (468–475 (GPPGVGKT)) interacts with ATP. The Lon proteolytic domain maps to 811-995 (QTPVGVVMGL…NEIFDIAFQS (185 aa)). Active-site residues include Ser901 and Lys944.

This sequence belongs to the peptidase S16 family. As to quaternary structure, homohexamer or homoheptamer. Organized in a ring with a central cavity.

Its subcellular location is the mitochondrion matrix. It catalyses the reaction Hydrolysis of proteins in presence of ATP.. Functionally, ATP-dependent serine protease that mediates the selective degradation of misfolded, unassembled or oxidatively damaged polypeptides as well as certain short-lived regulatory proteins in the mitochondrial matrix. May also have a chaperone function in the assembly of inner membrane protein complexes. Participates in the regulation of mitochondrial gene expression and in the maintenance of the integrity of the mitochondrial genome. Binds to mitochondrial DNA in a site-specific manner. The polypeptide is Lon protease homolog, mitochondrial (Oryza sativa subsp. japonica (Rice)).